The chain runs to 156 residues: Small ribosomal subunit protein uS7 (156 aa).

Belongs to the universal ribosomal protein uS7 family. In terms of assembly, part of the 30S ribosomal subunit. Contacts proteins S9 and S11.

One of the primary rRNA binding proteins, it binds directly to 16S rRNA where it nucleates assembly of the head domain of the 30S subunit. Is located at the subunit interface close to the decoding center, probably blocks exit of the E-site tRNA. This is Small ribosomal subunit protein uS7 from Staphylococcus aureus (strain USA300).